Here is a 705-residue protein sequence, read N- to C-terminus: Polyphosphate kinase (705 aa).

ATP is bound at residue asparagine 58. Arginine 389 and arginine 419 together coordinate Mg(2+). The Phosphohistidine intermediate role is filled by histidine 449. Residues tyrosine 482, arginine 578, and histidine 606 each coordinate ATP.

It belongs to the polyphosphate kinase 1 (PPK1) family. Mg(2+) is required as a cofactor. An intermediate of this reaction is the autophosphorylated ppk in which a phosphate is covalently linked to a histidine residue through a N-P bond.

It carries out the reaction [phosphate](n) + ATP = [phosphate](n+1) + ADP. Catalyzes the reversible transfer of the terminal phosphate of ATP to form a long-chain polyphosphate (polyP). This Halalkalibacterium halodurans (strain ATCC BAA-125 / DSM 18197 / FERM 7344 / JCM 9153 / C-125) (Bacillus halodurans) protein is Polyphosphate kinase.